Reading from the N-terminus, the 323-residue chain is Putative CRISPR-associated protein SSO1401 (323 aa).

In terms of assembly, sometimes seen associated with the aCascade ribonucleoprotein complex, minimally composed of Csa2 and Cas5a, which binds crRNA. Other probable components of aCascade in strain P1 are Cas6 and Csa5, while SSO1399, Cas5b (SSO1400) and SSO1401 have sometimes been seen weakly associated. The Csa2-Cas5a-crRNA complex also binds target DNA homologous to crRNA, probably forming an R-loop. Purified aCascade forms a filament about 6 nm in width.

Functionally, CRISPR (clustered regularly interspaced short palindromic repeat) is an adaptive immune system that provides protection against mobile genetic elements (viruses, transposable elements and conjugative plasmids). CRISPR clusters contain spacers, sequences complementary to antecedent mobile elements, and target invading nucleic acids. CRISPR clusters are transcribed and processed into CRISPR RNA (crRNA). This is Putative CRISPR-associated protein SSO1401 from Saccharolobus solfataricus (strain ATCC 35092 / DSM 1617 / JCM 11322 / P2) (Sulfolobus solfataricus).